Here is a 164-residue protein sequence, read N- to C-terminus: Cyclic pyranopterin monophosphate synthase (164 aa).

Substrate contacts are provided by residues 75-77 and 112-113; these read MAH and ME. Residue aspartate 127 is part of the active site.

It belongs to the MoaC family. As to quaternary structure, homohexamer; trimer of dimers.

It catalyses the reaction (8S)-3',8-cyclo-7,8-dihydroguanosine 5'-triphosphate = cyclic pyranopterin phosphate + diphosphate. It functions in the pathway cofactor biosynthesis; molybdopterin biosynthesis. Its function is as follows. Catalyzes the conversion of (8S)-3',8-cyclo-7,8-dihydroguanosine 5'-triphosphate to cyclic pyranopterin monophosphate (cPMP). This is Cyclic pyranopterin monophosphate synthase from Desulforamulus reducens (strain ATCC BAA-1160 / DSM 100696 / MI-1) (Desulfotomaculum reducens).